Consider the following 764-residue polypeptide: Nucleolar transcription factor 1 (764 aa).

Met1 carries the N-acetylmethionine modification. Residues 1–21 (MNGEADCPTDLEMAAPKGQDR) form a disordered region. 2 DNA-binding regions (HMG box) span residues 112–180 (PKKP…ARFR) and 196–264 (PEKP…RDYI). Position 201 is a phosphothreonine (Thr201). A phosphoserine mark is found at Ser273, Ser336, Ser364, Ser389, Ser412, Ser433, Ser435, Ser484, Ser495, Ser546, Ser584, and Ser638. Residues 298–362 (TKPPPNSYSL…DYEVELLRFL (65 aa)) constitute a DNA-binding region (HMG box 3). Positions 381–411 (NINKKQATSPASKKPAQEGGKGGSEKPKRPV) are disordered. DNA-binding regions (HMG box) lie at residues 407-475 (PKRP…GGER), 482-549 (PESP…SEMR), and 568-634 (KKPP…DLWV). The segment at 459-487 (REAALKAQSERKPGGEREERGKLPESPKR) is disordered. Residues 546 to 576 (SEMRAPPAATNSSKKMKFQGEPKKPPMNGYQ) are disordered. The disordered stretch occupies residues 648 to 764 (YISNKRKSMT…SGDSSDSDSN (117 aa)). Residues 664-674 (PKSSRTTLQSK) are compositionally biased toward polar residues. Residues 677-745 (SEEDDEEDED…DDDEDEDNES (69 aa)) show a composition bias toward acidic residues. The segment covering 746–758 (EGSSSSSSSSGDS) has biased composition (low complexity).

As to quaternary structure, homodimer. Part of Pol I pre-initiation complex (PIC), in which Pol I core assembles with RRN3 and promoter-bound UTBF and SL1/TIF-IB complex. Interacts with TOP2A in the context of Pol I complex. Interacts with TBP. Interacts with TAF1A. Interacts with RASL11A. Binds to IRS1 and PIK3CA. Interacts with DHX33. Interacts with PHF6. Interacts with CEBPA (isoform 1 and isoform 4). Interacts with DDX11. Interacts with NOP53. Interacts with ALKBH2. In terms of processing, phosphorylated and activated by PIK3CA.

The protein resides in the nucleus. The protein localises to the nucleolus. Functionally, recognizes the ribosomal RNA gene promoter and activates transcription mediated by RNA polymerase I (Pol I) through cooperative interactions with the transcription factor SL1/TIF-IB complex. It binds specifically to the upstream control element and can activate Pol I promoter escape. The chain is Nucleolar transcription factor 1 (UBTF) from Homo sapiens (Human).